The primary structure comprises 59 residues: Temporin-CDYe (59 aa).

An N-terminal signal peptide occupies residues 1 to 22 (MFTLKKSMLLLLFLGTISLTLC). The propeptide occupies 23–42 (EEERDANEEEENGGEVKVEE).

It belongs to the frog skin active peptide (FSAP) family. Temporin subfamily. In terms of tissue distribution, expressed by the skin glands.

It is found in the secreted. Its function is as follows. Antimicrobial peptide. This is Temporin-CDYe from Rana dybowskii (Dybovsky's frog).